The following is a 358-amino-acid chain: Pituitary-specific positive transcription factor 1 (358 aa).

The short motif at Ala-5–Thr-12 is the 9aaTAD element. Residues Pro-164–Pro-195 form a disordered region. Positions Lys-177–Asp-187 are enriched in basic and acidic residues. The POU-specific domain maps to Met-192–Glu-266. A DNA-binding region (homeobox) is located at residues Lys-282–Lys-341.

This sequence belongs to the POU transcription factor family. Class-1 subfamily.

The protein resides in the nucleus. Its function is as follows. Transcription factor that activates growth hormone and prolactin genes. Specifically binds to the consensus sequence 5'-TAAAT-3'. The protein is Pituitary-specific positive transcription factor 1 (pou1f1) of Oncorhynchus mykiss (Rainbow trout).